Here is a 466-residue protein sequence, read N- to C-terminus: tRNA-2-methylthio-N(6)-dimethylallyladenosine synthase (466 aa).

In terms of domain architecture, MTTase N-terminal spans 22 to 139 (RRYYVWTVGC…VVALAPNPIY (118 aa)). Positions 31, 67, 101, 166, 170, and 173 each coordinate [4Fe-4S] cluster. Residues 152 to 386 (SHPPVSVHVP…EQLQEQIATE (235 aa)) enclose the Radical SAM core domain. A TRAM domain is found at 389-449 (ARFLGQTVEV…PWSLQGVPQL (61 aa)).

This sequence belongs to the methylthiotransferase family. MiaB subfamily. Monomer. It depends on [4Fe-4S] cluster as a cofactor.

Its subcellular location is the cytoplasm. It carries out the reaction N(6)-dimethylallyladenosine(37) in tRNA + (sulfur carrier)-SH + AH2 + 2 S-adenosyl-L-methionine = 2-methylsulfanyl-N(6)-dimethylallyladenosine(37) in tRNA + (sulfur carrier)-H + 5'-deoxyadenosine + L-methionine + A + S-adenosyl-L-homocysteine + 2 H(+). Its function is as follows. Catalyzes the methylthiolation of N6-(dimethylallyl)adenosine (i(6)A), leading to the formation of 2-methylthio-N6-(dimethylallyl)adenosine (ms(2)i(6)A) at position 37 in tRNAs that read codons beginning with uridine. The protein is tRNA-2-methylthio-N(6)-dimethylallyladenosine synthase of Chloroflexus aurantiacus (strain ATCC 29366 / DSM 635 / J-10-fl).